A 494-amino-acid polypeptide reads, in one-letter code: Cytochrome P450 2A4 (494 aa).

The residue at position 131 (Ser-131) is a Phosphoserine. Lys-379 bears the N6-acetyllysine mark. Residue Cys-439 participates in heme binding.

It belongs to the cytochrome P450 family. Heme serves as cofactor. Kidney and lung. Expressed in liver, with a strong circadian rhythmicity. Circadian expression is regulated by DBP.

The protein localises to the endoplasmic reticulum membrane. The protein resides in the microsome membrane. It catalyses the reaction an organic molecule + reduced [NADPH--hemoprotein reductase] + O2 = an alcohol + oxidized [NADPH--hemoprotein reductase] + H2O + H(+). Functionally, highly active in the 15-alpha-hydroxylation of testosterone. Also active in the 15-alpha-hydroxylation of progesterone and androstenedione. Little or no activity on corticosterone, pregnenolone, dehydroepiandrosterone, estradiol or estriol. This Mus musculus (Mouse) protein is Cytochrome P450 2A4 (Cyp2a4).